Here is a 92-residue protein sequence, read N- to C-terminus: Small ribosomal subunit protein uS19c (92 aa).

It belongs to the universal ribosomal protein uS19 family.

The protein localises to the plastid. The protein resides in the chloroplast. Functionally, protein S19 forms a complex with S13 that binds strongly to the 16S ribosomal RNA. The sequence is that of Small ribosomal subunit protein uS19c (rps19) from Glycine max (Soybean).